Reading from the N-terminus, the 4265-residue chain is Dynein axonemal heavy chain 1 (4265 aa).

The interval 1-88 (MEQPNSKGYS…KSPLTGTDKK (88 aa)) is disordered. The segment at 1–1542 (MEQPNSKGYS…YIRAVNAEFI (1542 aa)) is stem. Positions 60-69 (PHLPLPPAPP) are enriched in pro residues. AAA stretches follow at residues 1543–1764 (YGYE…VISA), 1824–2057 (EAIR…SSVK), 2189–2449 (TMVP…VFQG), and 2547–2799 (DYNQ…LTRH). The GPAGTGKT motif signature appears at 1581–1588 (GPAGTGKT). 1581-1588 (GPAGTGKT) serves as a coordination point for ATP. The CFDEFNR motif signature appears at 1631–1637 (CFDEFNR). Residues 1862–1869 (GPTGSGKS), 2227–2234 (GPTGTGKT), and 2586–2593 (GVGGSGRS) each bind ATP. A stalk region spans residues 2814 to 3112 (FSILIGQKKL…EELELKCEQC (299 aa)). Residues 3074-3122 (LDEAKQRLREVEDGIATMQAKYRECITKKEELELKCEQCEQRLGRAGKL) are a coiled coil. AAA stretches follow at residues 3197 to 3427 (LGNP…EIQA) and 3640 to 3859 (MQDF…QLKM).

It belongs to the dynein heavy chain family. Consists of at least two heavy chains and a number of intermediate and light chains. In terms of tissue distribution, expressed primarily in trachea and testis, 2 tissues containing axonemal structures. Also expressed in brain.

The protein localises to the cytoplasm. It localises to the cytoskeleton. The protein resides in the cilium axoneme. It is found in the cell projection. Its subcellular location is the cilium. The protein localises to the flagellum. Functionally, force generating protein of cilia required for sperm flagellum motility. Produces force towards the minus ends of microtubules. Dynein has ATPase activity; the force-producing power stroke is thought to occur on release of ADP. Required in spermatozoa for the formation of the inner dynein arms and biogenesis of the axoneme. In Homo sapiens (Human), this protein is Dynein axonemal heavy chain 1.